The chain runs to 737 residues: Catalase-peroxidase (737 aa).

The segment at 1–33 (MPEATEHPPIGEAQTEPAQSGCPMVIKPPVEGG) is disordered. Residues 107–235 (WHAAGTYRVQ…LGASHMGLIY (129 aa)) constitute a cross-link (tryptophyl-tyrosyl-methioninium (Trp-Tyr) (with M-261)). Histidine 108 serves as the catalytic Proton acceptor. The segment at residues 235–261 (YVNPEGPEGNPDPIAAAIDIRETFGRM) is a cross-link (tryptophyl-tyrosyl-methioninium (Tyr-Met) (with W-107)). Residue histidine 276 coordinates heme.

This sequence belongs to the peroxidase family. Peroxidase/catalase subfamily. Homodimer or homotetramer. Heme b is required as a cofactor. Formation of the three residue Trp-Tyr-Met cross-link is important for the catalase, but not the peroxidase activity of the enzyme.

It carries out the reaction H2O2 + AH2 = A + 2 H2O. The enzyme catalyses 2 H2O2 = O2 + 2 H2O. Bifunctional enzyme with both catalase and broad-spectrum peroxidase activity. May play a role in polycyclic aromatic hydrocarbon (PAH) metabolism. The polypeptide is Catalase-peroxidase (Mycolicibacterium vanbaalenii (Mycobacterium vanbaalenii)).